The following is a 299-amino-acid chain: tRNA dimethylallyltransferase (299 aa).

13-20 (GPTASGKT) is an ATP binding site. 15 to 20 (TASGKT) provides a ligand contact to substrate. The segment at 38-41 (DSRQ) is interaction with substrate tRNA.

Belongs to the IPP transferase family. Monomer. Mg(2+) is required as a cofactor.

It catalyses the reaction adenosine(37) in tRNA + dimethylallyl diphosphate = N(6)-dimethylallyladenosine(37) in tRNA + diphosphate. Catalyzes the transfer of a dimethylallyl group onto the adenine at position 37 in tRNAs that read codons beginning with uridine, leading to the formation of N6-(dimethylallyl)adenosine (i(6)A). The polypeptide is tRNA dimethylallyltransferase (Prochlorococcus marinus (strain MIT 9211)).